Reading from the N-terminus, the 406-residue chain is Bifunctional enzyme IspD/IspF (406 aa).

Residues 1 to 247 (MSLIRVNGEA…ALFFNPAKDT (247 aa)) form a 2-C-methyl-D-erythritol 4-phosphate cytidylyltransferase region. The interval 248-406 (FIGMGFDTHA…HVSMRYKQKL (159 aa)) is 2-C-methyl-D-erythritol 2,4-cyclodiphosphate synthase. A divalent metal cation is bound by residues Asp-254 and His-256. Residues 254-256 (DTH) and 280-281 (HS) contribute to the 4-CDP-2-C-methyl-D-erythritol 2-phosphate site. His-288 contributes to the a divalent metal cation binding site. 4-CDP-2-C-methyl-D-erythritol 2-phosphate contacts are provided by residues 302–304 (DIG), 307–311 (FPDND), 378–381 (TTME), Phe-385, and Lys-388.

It in the N-terminal section; belongs to the IspD/TarI cytidylyltransferase family. IspD subfamily. In the C-terminal section; belongs to the IspF family. It depends on a divalent metal cation as a cofactor.

It catalyses the reaction 2-C-methyl-D-erythritol 4-phosphate + CTP + H(+) = 4-CDP-2-C-methyl-D-erythritol + diphosphate. The enzyme catalyses 4-CDP-2-C-methyl-D-erythritol 2-phosphate = 2-C-methyl-D-erythritol 2,4-cyclic diphosphate + CMP. It functions in the pathway isoprenoid biosynthesis; isopentenyl diphosphate biosynthesis via DXP pathway; isopentenyl diphosphate from 1-deoxy-D-xylulose 5-phosphate: step 2/6. It participates in isoprenoid biosynthesis; isopentenyl diphosphate biosynthesis via DXP pathway; isopentenyl diphosphate from 1-deoxy-D-xylulose 5-phosphate: step 4/6. In terms of biological role, bifunctional enzyme that catalyzes the formation of 4-diphosphocytidyl-2-C-methyl-D-erythritol from CTP and 2-C-methyl-D-erythritol 4-phosphate (MEP) (IspD), and catalyzes the conversion of 4-diphosphocytidyl-2-C-methyl-D-erythritol 2-phosphate (CDP-ME2P) to 2-C-methyl-D-erythritol 2,4-cyclodiphosphate (ME-CPP) with a corresponding release of cytidine 5-monophosphate (CMP) (IspF). In Helicobacter pylori (strain Shi470), this protein is Bifunctional enzyme IspD/IspF.